A 157-amino-acid chain; its full sequence is 6,7-dimethyl-8-ribityllumazine synthase (157 aa).

Residues Phe-22, 56–58 (AFE), and 81–83 (VLI) contribute to the 5-amino-6-(D-ribitylamino)uracil site. 86–87 (ET) contacts (2S)-2-hydroxy-3-oxobutyl phosphate. Residue His-89 is the Proton donor of the active site. Phe-114 is a binding site for 5-amino-6-(D-ribitylamino)uracil. Arg-128 provides a ligand contact to (2S)-2-hydroxy-3-oxobutyl phosphate.

It belongs to the DMRL synthase family.

The catalysed reaction is (2S)-2-hydroxy-3-oxobutyl phosphate + 5-amino-6-(D-ribitylamino)uracil = 6,7-dimethyl-8-(1-D-ribityl)lumazine + phosphate + 2 H2O + H(+). The protein operates within cofactor biosynthesis; riboflavin biosynthesis; riboflavin from 2-hydroxy-3-oxobutyl phosphate and 5-amino-6-(D-ribitylamino)uracil: step 1/2. In terms of biological role, catalyzes the formation of 6,7-dimethyl-8-ribityllumazine by condensation of 5-amino-6-(D-ribitylamino)uracil with 3,4-dihydroxy-2-butanone 4-phosphate. This is the penultimate step in the biosynthesis of riboflavin. This Chlamydia trachomatis serovar L2 (strain ATCC VR-902B / DSM 19102 / 434/Bu) protein is 6,7-dimethyl-8-ribityllumazine synthase.